A 198-amino-acid chain; its full sequence is Recombination protein RecR (198 aa).

A C4-type zinc finger spans residues 57–72 (CEKCNTFTEAQICEVC). Residues 80 to 175 (TLLCVVETPA…AVTRLARGVP (96 aa)) form the Toprim domain.

It belongs to the RecR family.

Functionally, may play a role in DNA repair. It seems to be involved in an RecBC-independent recombinational process of DNA repair. It may act with RecF and RecO. The sequence is that of Recombination protein RecR from Paraburkholderia phytofirmans (strain DSM 17436 / LMG 22146 / PsJN) (Burkholderia phytofirmans).